The following is a 356-amino-acid chain: Cyanide hydratase (356 aa).

Residues 15-290 form the CN hydrolase domain; that stretch reads FKVAAVQAEP…EVVLYANISL (276 aa). The active-site Proton acceptor is Glu-55. Lys-137 is a catalytic residue. The active-site Nucleophile is Cys-172. The tract at residues 331–356 is disordered; the sequence is DEQAASKAQQAEIDNAGKGSIVPSKL.

It belongs to the carbon-nitrogen hydrolase superfamily. Nitrilase family.

The enzyme catalyses formamide = hydrogen cyanide + H2O. Catalyzes the hydration of cyanide to formamide. Degradation of cyanide may be important for plant pathogenic fungi in infection of cyanogenic plants. This is Cyanide hydratase from Armillaria gallica (Bulbous honey fungus).